Here is a 391-residue protein sequence, read N- to C-terminus: MKLICRQSDLSSGLSLVSRAVSSRPTHPVLGNVLLEADADKNYLRLTAFDLSLGIQSSFTADVQQSGRITLPAKLLNDIVSRLPDGDITLAIDPDGDAGDSHLTTITSESGRFQIRGLDADDFPALPTVEGVKPLLLPVATLNEGLRGALFAASTDETKQVLTGVHIKGSGDSLEFAATDGHRLAVVEAPTQIENDEGEAVITGSDLADFAVTIPARALRELERMVASQGNSDLVSLVVNDTQVIFELGDQRLTSRKLEGAYPAYDQLIPRQFSRTVTMERKRLITSLERVSVLADQKNNLVTFTLQSPGNQLQLAVEAQDLGHGEESMGAEIIGEGGQIAFNIKYLMDGLKALPSNDIQMQLNEGNQPVIFTPLGGLKMTYLVMPVRLVN.

It belongs to the beta sliding clamp family. In terms of assembly, forms a ring-shaped head-to-tail homodimer around DNA which binds and tethers DNA polymerases and other proteins to the DNA. The DNA replisome complex has a single clamp-loading complex (3 tau and 1 each of delta, delta', psi and chi subunits) which binds 3 Pol III cores (1 core on the leading strand and 2 on the lagging strand) each with a beta sliding clamp dimer. Additional proteins in the replisome are other copies of gamma, psi and chi, Ssb, DNA helicase and RNA primase.

Its subcellular location is the cytoplasm. In terms of biological role, confers DNA tethering and processivity to DNA polymerases and other proteins. Acts as a clamp, forming a ring around DNA (a reaction catalyzed by the clamp-loading complex) which diffuses in an ATP-independent manner freely and bidirectionally along dsDNA. Initially characterized for its ability to contact the catalytic subunit of DNA polymerase III (Pol III), a complex, multichain enzyme responsible for most of the replicative synthesis in bacteria; Pol III exhibits 3'-5' exonuclease proofreading activity. The beta chain is required for initiation of replication as well as for processivity of DNA replication. This is Beta sliding clamp (dnaN) from Synechocystis sp. (strain ATCC 27184 / PCC 6803 / Kazusa).